The sequence spans 110 residues: Large ribosomal subunit protein uL22 (110 aa).

Belongs to the universal ribosomal protein uL22 family. As to quaternary structure, part of the 50S ribosomal subunit.

In terms of biological role, this protein binds specifically to 23S rRNA; its binding is stimulated by other ribosomal proteins, e.g. L4, L17, and L20. It is important during the early stages of 50S assembly. It makes multiple contacts with different domains of the 23S rRNA in the assembled 50S subunit and ribosome. Its function is as follows. The globular domain of the protein is located near the polypeptide exit tunnel on the outside of the subunit, while an extended beta-hairpin is found that lines the wall of the exit tunnel in the center of the 70S ribosome. The protein is Large ribosomal subunit protein uL22 of Dichelobacter nodosus (strain VCS1703A).